A 116-amino-acid polypeptide reads, in one-letter code: UPF0102 protein IL0423 (116 aa).

The protein belongs to the UPF0102 family.

This chain is UPF0102 protein IL0423, found in Idiomarina loihiensis (strain ATCC BAA-735 / DSM 15497 / L2-TR).